A 413-amino-acid polypeptide reads, in one-letter code: Multifunctional CCA protein (413 aa).

ATP is bound by residues glycine 8 and arginine 11. CTP contacts are provided by glycine 8 and arginine 11. Residues aspartate 21 and aspartate 23 each coordinate Mg(2+). ATP is bound by residues arginine 91, arginine 143, and arginine 146. CTP contacts are provided by arginine 91, arginine 143, and arginine 146. Residues 232–333 (TGVHVMMVVD…VRLFERSDAL (102 aa)) enclose the HD domain.

Belongs to the tRNA nucleotidyltransferase/poly(A) polymerase family. Bacterial CCA-adding enzyme type 1 subfamily. Monomer. Can also form homodimers and oligomers. It depends on Mg(2+) as a cofactor. The cofactor is Ni(2+).

It carries out the reaction a tRNA precursor + 2 CTP + ATP = a tRNA with a 3' CCA end + 3 diphosphate. The enzyme catalyses a tRNA with a 3' CCA end + 2 CTP + ATP = a tRNA with a 3' CCACCA end + 3 diphosphate. Catalyzes the addition and repair of the essential 3'-terminal CCA sequence in tRNAs without using a nucleic acid template. Adds these three nucleotides in the order of C, C, and A to the tRNA nucleotide-73, using CTP and ATP as substrates and producing inorganic pyrophosphate. tRNA 3'-terminal CCA addition is required both for tRNA processing and repair. Also involved in tRNA surveillance by mediating tandem CCA addition to generate a CCACCA at the 3' terminus of unstable tRNAs. While stable tRNAs receive only 3'-terminal CCA, unstable tRNAs are marked with CCACCA and rapidly degraded. The polypeptide is Multifunctional CCA protein (Burkholderia vietnamiensis (strain G4 / LMG 22486) (Burkholderia cepacia (strain R1808))).